The primary structure comprises 259 residues: uncharacterized protein (259 aa).

E46 is a catalytic residue.

This sequence belongs to the PhzF family.

This is an uncharacterized protein from Pseudomonas aeruginosa (strain ATCC 15692 / DSM 22644 / CIP 104116 / JCM 14847 / LMG 12228 / 1C / PRS 101 / PAO1).